A 214-amino-acid polypeptide reads, in one-letter code: Dephospho-CoA kinase (214 aa).

In terms of domain architecture, DPCK spans 3–202 (KIGLTGGIGS…DRWLALAGAA (200 aa)). Residue 11–16 (GSGKSR) participates in ATP binding.

This sequence belongs to the CoaE family.

It localises to the cytoplasm. The enzyme catalyses 3'-dephospho-CoA + ATP = ADP + CoA + H(+). It functions in the pathway cofactor biosynthesis; coenzyme A biosynthesis; CoA from (R)-pantothenate: step 5/5. In terms of biological role, catalyzes the phosphorylation of the 3'-hydroxyl group of dephosphocoenzyme A to form coenzyme A. The chain is Dephospho-CoA kinase from Bordetella pertussis (strain Tohama I / ATCC BAA-589 / NCTC 13251).